Here is a 372-residue protein sequence, read N- to C-terminus: Queuine tRNA-ribosyltransferase (372 aa).

Residue aspartate 89 is the Proton acceptor of the active site. Substrate is bound by residues 89–93 (DSGGF), aspartate 161, and glycine 232. Residues 262 to 268 (GIGDLPS) form an RNA binding region. The active-site Nucleophile is aspartate 281. Residues 286 to 290 (TKAAR) form an RNA binding; important for wobble base 34 recognition region. Cysteine 319, cysteine 321, cysteine 324, and histidine 351 together coordinate Zn(2+).

Belongs to the queuine tRNA-ribosyltransferase family. As to quaternary structure, homodimer. Within each dimer, one monomer is responsible for RNA recognition and catalysis, while the other monomer binds to the replacement base PreQ1. Zn(2+) serves as cofactor.

It catalyses the reaction 7-aminomethyl-7-carbaguanine + guanosine(34) in tRNA = 7-aminomethyl-7-carbaguanosine(34) in tRNA + guanine. It functions in the pathway tRNA modification; tRNA-queuosine biosynthesis. Catalyzes the base-exchange of a guanine (G) residue with the queuine precursor 7-aminomethyl-7-deazaguanine (PreQ1) at position 34 (anticodon wobble position) in tRNAs with GU(N) anticodons (tRNA-Asp, -Asn, -His and -Tyr). Catalysis occurs through a double-displacement mechanism. The nucleophile active site attacks the C1' of nucleotide 34 to detach the guanine base from the RNA, forming a covalent enzyme-RNA intermediate. The proton acceptor active site deprotonates the incoming PreQ1, allowing a nucleophilic attack on the C1' of the ribose to form the product. After dissociation, two additional enzymatic reactions on the tRNA convert PreQ1 to queuine (Q), resulting in the hypermodified nucleoside queuosine (7-(((4,5-cis-dihydroxy-2-cyclopenten-1-yl)amino)methyl)-7-deazaguanosine). The protein is Queuine tRNA-ribosyltransferase of Chlamydia muridarum (strain MoPn / Nigg).